The primary structure comprises 306 residues: Diacylglycerol kinase (306 aa).

One can recognise a DAGKc domain in the interval 1–132 (MRKRARIIYN…VDIGKMNSRY (132 aa)). Residues 10 to 14 (NPTSG), threonine 41, 67 to 73 (GDGTLNE), and threonine 94 each bind ATP. Residues arginine 213, aspartate 216, and tyrosine 218 each coordinate Mg(2+). Catalysis depends on glutamate 273, which acts as the Proton acceptor.

Belongs to the diacylglycerol/lipid kinase family. In terms of assembly, homodimer. Mg(2+) is required as a cofactor.

It carries out the reaction a 1,2-diacyl-sn-glycerol + ATP = a 1,2-diacyl-sn-glycero-3-phosphate + ADP + H(+). Functionally, catalyzes the phosphorylation of diacylglycerol (DAG) into phosphatidic acid. Is a key enzyme involved in the production of lipoteichoic acid by reintroducing DAG formed from the breakdown of membrane phospholipids into the phosphatidylglycerol biosynthetic pathway. The sequence is that of Diacylglycerol kinase (dagK) from Staphylococcus carnosus (strain TM300).